The primary structure comprises 154 residues: SsrA-binding protein (154 aa).

Belongs to the SmpB family.

Its subcellular location is the cytoplasm. In terms of biological role, required for rescue of stalled ribosomes mediated by trans-translation. Binds to transfer-messenger RNA (tmRNA), required for stable association of tmRNA with ribosomes. tmRNA and SmpB together mimic tRNA shape, replacing the anticodon stem-loop with SmpB. tmRNA is encoded by the ssrA gene; the 2 termini fold to resemble tRNA(Ala) and it encodes a 'tag peptide', a short internal open reading frame. During trans-translation Ala-aminoacylated tmRNA acts like a tRNA, entering the A-site of stalled ribosomes, displacing the stalled mRNA. The ribosome then switches to translate the ORF on the tmRNA; the nascent peptide is terminated with the 'tag peptide' encoded by the tmRNA and targeted for degradation. The ribosome is freed to recommence translation, which seems to be the essential function of trans-translation. The polypeptide is SsrA-binding protein (Solidesulfovibrio magneticus (strain ATCC 700980 / DSM 13731 / RS-1) (Desulfovibrio magneticus)).